A 274-amino-acid polypeptide reads, in one-letter code: Halorhodopsin (274 aa).

The propeptide occupies 1-21 (MSITSVPGVVDAGVLGAQSAA). Residues 22–25 (AVRE) are Extracellular-facing. The chain crosses the membrane as a helical span at residues 26–51 (NALLSSSLWVNVALAGIAILVFVYMG). Residues 52-57 (RTIRPG) are Cytoplasmic-facing. The chain crosses the membrane as a helical span at residues 58-81 (RPRLIWGATLMIPLVSISSYLGLL). At 82–105 (SGLTVGMIEMPAGHALAGEMVRSQ) the chain is on the extracellular side. 3 residues coordinate chloride: glutamine 105, threonine 111, and serine 115. A helical membrane pass occupies residues 106 to 127 (WGRYLTWALSTPMILLALGLLA). The Cytoplasmic segment spans residues 128–130 (DVD). Residues 131 to 154 (LGSLFTVIAADIGMCVTGLAAAMT) traverse the membrane as a helical segment. Over 155–157 (TSA) the chain is Extracellular. The helical transmembrane segment at 158 to 180 (LLFRWAFYAISCAFFVVVLSALV) threads the bilayer. At 181 to 192 (TDWAASASSAGT) the chain is on the cytoplasmic side. A helical transmembrane segment spans residues 193-216 (AEIFDTLRVLTVVLWLGYPIVWAV). The Extracellular portion of the chain corresponds to 217-226 (GVEGLALVQS). The chain crosses the membrane as a helical span at residues 227–255 (VGVTSWAYSVLDVFAKYVFAFILLRWVAN). Lysine 242 is subject to N6-(retinylidene)lysine. At 256–274 (NERTVAVAGQTLGTMSSDD) the chain is on the cytoplasmic side.

The protein belongs to the archaeal/bacterial/fungal opsin family. Homotrimer.

It is found in the cell membrane. Light-driven chloride pump. This Halobacterium salinarum (strain ATCC 29341 / DSM 671 / R1) protein is Halorhodopsin (hop).